A 422-amino-acid polypeptide reads, in one-letter code: Serine hydroxymethyltransferase (422 aa).

Residues leucine 118 and 122–124 each bind (6S)-5,6,7,8-tetrahydrofolate; that span reads GHL. N6-(pyridoxal phosphate)lysine is present on lysine 227. Glutamate 242 lines the (6S)-5,6,7,8-tetrahydrofolate pocket.

This sequence belongs to the SHMT family. Homodimer. Requires pyridoxal 5'-phosphate as cofactor.

The protein localises to the cytoplasm. The catalysed reaction is (6R)-5,10-methylene-5,6,7,8-tetrahydrofolate + glycine + H2O = (6S)-5,6,7,8-tetrahydrofolate + L-serine. Its pathway is one-carbon metabolism; tetrahydrofolate interconversion. It participates in amino-acid biosynthesis; glycine biosynthesis; glycine from L-serine: step 1/1. In terms of biological role, catalyzes the reversible interconversion of serine and glycine with tetrahydrofolate (THF) serving as the one-carbon carrier. This reaction serves as the major source of one-carbon groups required for the biosynthesis of purines, thymidylate, methionine, and other important biomolecules. Also exhibits THF-independent aldolase activity toward beta-hydroxyamino acids, producing glycine and aldehydes, via a retro-aldol mechanism. The chain is Serine hydroxymethyltransferase from Sulfurihydrogenibium sp. (strain YO3AOP1).